The chain runs to 425 residues: Glucose-1-phosphate adenylyltransferase (425 aa).

Residues Tyr109, Gly175, 190–191 (EK), and Ser208 contribute to the alpha-D-glucose 1-phosphate site.

It belongs to the bacterial/plant glucose-1-phosphate adenylyltransferase family. Homotetramer.

It carries out the reaction alpha-D-glucose 1-phosphate + ATP + H(+) = ADP-alpha-D-glucose + diphosphate. It functions in the pathway glycan biosynthesis; glycogen biosynthesis. Functionally, involved in the biosynthesis of ADP-glucose, a building block required for the elongation reactions to produce glycogen. Catalyzes the reaction between ATP and alpha-D-glucose 1-phosphate (G1P) to produce pyrophosphate and ADP-Glc. This is Glucose-1-phosphate adenylyltransferase from Saccharophagus degradans (strain 2-40 / ATCC 43961 / DSM 17024).